The sequence spans 359 residues: MPRPLIATIDIAALRSNLALAKARAPHSKAWAVVKANAYGHGLERGMRGFAAADGLGLIELDAAARLRELGWNKRILLLEGFFDASDTKLLAEHRLDTVIHCEEQLLMLEQAKLRTQIDVHLKLNSGMNRLGFTPARYRAAYERLRAIPAVRHISFVTHFANAEDPDNPVLPVQEQVRRFKEATRDLPGEKSLANSATDLLHPAAAADWIRPGIMLYGATPGAQSAEQFGLRAAMSLHSEIIGVQHIVAGDAVGYGSAFVATAPMTIGVVACGYADGYPRHAPSGTPVIVDGVKTRMVGRVSMDMITVDLTPVAKPRIGSKVTLWGASLPIDEVANAAGTVGYELMCGLAPRVQIVEVN.

K35 (proton acceptor; specific for D-alanine) is an active-site residue. K35 carries the post-translational modification N6-(pyridoxal phosphate)lysine. R130 lines the substrate pocket. Y255 functions as the Proton acceptor; specific for L-alanine in the catalytic mechanism. M303 contributes to the substrate binding site.

It belongs to the alanine racemase family. Requires pyridoxal 5'-phosphate as cofactor.

It catalyses the reaction L-alanine = D-alanine. The protein operates within amino-acid biosynthesis; D-alanine biosynthesis; D-alanine from L-alanine: step 1/1. Catalyzes the interconversion of L-alanine and D-alanine. May also act on other amino acids. The chain is Alanine racemase (alr) from Janthinobacterium sp. (strain Marseille) (Minibacterium massiliensis).